Consider the following 523-residue polypeptide: Heparanase (523 aa).

Residues 1–18 (MLVLLLLVLLLAVPPRRT) form the signal peptide. Residues 42 to 44 (DAS), threonine 77, and 137 to 141 (KKHKN) each bind heparan sulfate group. 2 N-linked (GlcNAc...) asparagine glycosylation sites follow: asparagine 141 and asparagine 196. The active-site Proton donor is glutamate 204. Residues 250 to 260 (QPRKHTQHLLR), histidine 276, and arginine 283 each bind heparan sulfate group. Residues 268 to 397 (KAIDSVTWHH…LLYKRLVGTR (130 aa)) form a required for heterodimerization with the heparanase 8 kDa subunit region. Catalysis depends on glutamate 323, which acts as the Nucleophile. Residues 328-330 (YGG) and 369-371 (GSY) contribute to the heparan sulfate group site. Cysteine 417 and cysteine 522 are joined by a disulfide. N-linked (GlcNAc...) asparagine glycans are attached at residues asparagine 436 and asparagine 439. The tract at residues 507–523 (FSYGFYVIRNAKAIACI) is required for transferring proheparanase to the Golgi apparatus, secretion and subsequent enzyme activity and for enhancement of PKB/AKT1 phosphorylation.

This sequence belongs to the glycosyl hydrolase 79 family. As to quaternary structure, heterodimer; the active enzyme is a heterodimer of the 60 kDa and 45 kDa proteolytic products. N-glycosylated. Post-translationally, proteolytically cleaved to produce a 60 kDa and a 45 kDa product.

It is found in the secreted. The enzyme catalyses endohydrolysis of (1-&gt;4)-beta-D-glycosidic bonds of heparan sulfate chains in heparan sulfate proteoglycan.. In terms of biological role, endoglycosidase that cleaves heparan sulfate proteoglycans (HSPGs) into heparan sulfate side chains and core proteoglycans. Participates in extracellular matrix (ECM) degradation and remodeling. Selectively cleaves the linkage between a glucuronic acid unit and an N-sulfo glucosamine unit carrying either a 3-O-sulfo or a 6-O-sulfo group. Can also cleave the linkage between a glucuronic acid unit and an N-sulfo glucosamine unit carrying a 2-O-sulfo group, but not linkages between a glucuronic acid unit and a 2-O-sulfated iduronic acid moiety. Increases cell adhesion to the extracellular matrix (ECM), independent of its enzymatic activity. This is Heparanase (HPSE) from Gallus gallus (Chicken).